The sequence spans 127 residues: Large ribosomal subunit protein bL17 (127 aa).

This sequence belongs to the bacterial ribosomal protein bL17 family. In terms of assembly, part of the 50S ribosomal subunit. Contacts protein L32.

The chain is Large ribosomal subunit protein bL17 from Salmonella paratyphi A (strain AKU_12601).